Consider the following 312-residue polypeptide: Isoflavone reductase homolog (312 aa).

NADP(+) is bound by residues 10 to 16 (GGTGYVG), Arg-35, and Lys-44. Lys-138 functions as the Proton acceptor in the catalytic mechanism. Arg-142 is an NADP(+) binding site. His-270 lines the substrate pocket.

The protein belongs to the NmrA-type oxidoreductase family. Isoflavone reductase subfamily.

This chain is Isoflavone reductase homolog, found in Lupinus albus (White lupine).